Consider the following 317-residue polypeptide: o-succinylbenzoate synthase (317 aa).

Residues 71 to 73 (NAT) and Lys-95 each bind 2-succinylbenzoate. The active-site Proton donor is Lys-97. Residues Asp-128, Glu-154, and Asp-177 each contribute to the Mg(2+) site. 128-130 (DVN) lines the 2-succinylbenzoate pocket. Lys-201 lines the 2-succinylbenzoate pocket. Lys-201 (proton acceptor) is an active-site residue.

It belongs to the mandelate racemase/muconate lactonizing enzyme family. MenC type 1 subfamily. In terms of assembly, monomer. It depends on a divalent metal cation as a cofactor.

It catalyses the reaction (1R,6R)-6-hydroxy-2-succinyl-cyclohexa-2,4-diene-1-carboxylate = 2-succinylbenzoate + H2O. Its pathway is quinol/quinone metabolism; 1,4-dihydroxy-2-naphthoate biosynthesis; 1,4-dihydroxy-2-naphthoate from chorismate: step 4/7. The protein operates within quinol/quinone metabolism; menaquinone biosynthesis. Functionally, converts 2-succinyl-6-hydroxy-2,4-cyclohexadiene-1-carboxylate (SHCHC) to 2-succinylbenzoate (OSB). Does not show N-succinylamino acid racemase (NSAR) activity with N-succinyl-L-phenylglycine as substrate. The chain is o-succinylbenzoate synthase from Thermobifida fusca (strain YX).